The sequence spans 75 residues: MAKLKKSLFLVLFLGLVSLSICEEEKREEENEEVQEDDDQSEEKRGFLDVVKHVGKAVGKAALNAVTEMVNQAEQ.

The N-terminal stretch at 1–22 is a signal peptide; it reads MAKLKKSLFLVLFLGLVSLSIC. Residues 23 to 43 constitute a propeptide that is removed on maturation; that stretch reads EEEKREEENEEVQEDDDQSEE. The interval 25 to 44 is disordered; sequence EKREEENEEVQEDDDQSEEK. A compositionally biased stretch (acidic residues) spans 30–41; it reads ENEEVQEDDDQS.

Expressed by the skin glands.

The protein localises to the secreted. In terms of biological role, has antimicrobial activity. The sequence is that of Cruzioseptin-7 from Cruziohyla calcarifer (Splendid leaf frog).